The following is a 69-amino-acid chain: uncharacterized protein (69 aa).

Residues 32–54 (MLGAIDVAVAVASVPTLFVVTAI) traverse the membrane as a helical segment.

It is found in the membrane. This is an uncharacterized protein from Sinorhizobium fredii (strain NBRC 101917 / NGR234).